An 89-amino-acid chain; its full sequence is UPF0473 protein Helmi_02360 (89 aa).

The protein belongs to the UPF0473 family.

The chain is UPF0473 protein Helmi_02360 from Heliobacterium modesticaldum (strain ATCC 51547 / Ice1).